The primary structure comprises 231 residues: Lipoprotein-releasing system ATP-binding protein LolD (231 aa).

The ABC transporter domain maps to 6-230 (LSCKNVSKKY…DGELELVINS (225 aa)). An ATP-binding site is contributed by 42-49 (GLSGSGKT).

The protein belongs to the ABC transporter superfamily. Lipoprotein translocase (TC 3.A.1.125) family. As to quaternary structure, the complex is composed of two ATP-binding proteins (LolD) and two transmembrane proteins (LolC and LolE).

The protein localises to the cell inner membrane. Part of the ABC transporter complex LolCDE involved in the translocation of mature outer membrane-directed lipoproteins, from the inner membrane to the periplasmic chaperone, LolA. Responsible for the formation of the LolA-lipoprotein complex in an ATP-dependent manner. In Francisella tularensis subsp. tularensis (strain FSC 198), this protein is Lipoprotein-releasing system ATP-binding protein LolD.